The following is a 513-amino-acid chain: GMP synthase [glutamine-hydrolyzing] (513 aa).

The Glutamine amidotransferase type-1 domain maps to 9–198; sequence LILVLDFGSQ…VRRVCDCKGQ (190 aa). Cys86 functions as the Nucleophile in the catalytic mechanism. Catalysis depends on residues His172 and Glu174. The 190-residue stretch at 199 to 388 folds into the GMPS ATP-PPase domain; the sequence is WTMENFIEIE…LGIPEHLVWR (190 aa). 226 to 232 serves as a coordination point for ATP; sequence SGGVDSS.

As to quaternary structure, homodimer.

It carries out the reaction XMP + L-glutamine + ATP + H2O = GMP + L-glutamate + AMP + diphosphate + 2 H(+). Its pathway is purine metabolism; GMP biosynthesis; GMP from XMP (L-Gln route): step 1/1. Its function is as follows. Catalyzes the synthesis of GMP from XMP. In Staphylococcus aureus (strain Mu3 / ATCC 700698), this protein is GMP synthase [glutamine-hydrolyzing].